Here is a 230-residue protein sequence, read N- to C-terminus: Rab15 effector protein (230 aa).

Glycine 2 carries the N-myristoyl glycine lipid modification.

As to quaternary structure, interacts with the GTP-bound form of RAB15, RAB3A-D and RAB34.

It localises to the early endosome membrane. Functionally, effector that interacts with Rab GTPases in their active form (GTP-bound) including RAB15, RAB3A-D and RAB34. Controls downstream signaling such as cell proliferation and cell migration. Also regulates transferrin receptor recycling from the endocytic recycling compartment. The sequence is that of Rab15 effector protein from Mus musculus (Mouse).